We begin with the raw amino-acid sequence, 98 residues long: Large ribosomal subunit protein uL23 (98 aa).

This sequence belongs to the universal ribosomal protein uL23 family. In terms of assembly, part of the 50S ribosomal subunit. Contacts protein L29, and trigger factor when it is bound to the ribosome.

One of the early assembly proteins it binds 23S rRNA. One of the proteins that surrounds the polypeptide exit tunnel on the outside of the ribosome. Forms the main docking site for trigger factor binding to the ribosome. The polypeptide is Large ribosomal subunit protein uL23 (Rickettsia akari (strain Hartford)).